Consider the following 151-residue polypeptide: Acidic phospholipase A2 3 (151 aa).

A signal peptide spans 1–27; that stretch reads MYPAHLLVLLAVCVSLLGAASIPARPL. Intrachain disulfides connect cysteine 38/cysteine 104, cysteine 54/cysteine 151, cysteine 56/cysteine 72, cysteine 71/cysteine 132, cysteine 78/cysteine 125, cysteine 88/cysteine 118, and cysteine 111/cysteine 123. Tyrosine 55, glycine 57, and glycine 59 together coordinate Ca(2+). Histidine 75 is a catalytic residue. Aspartate 76 is a binding site for Ca(2+). Residue aspartate 126 is part of the active site.

This sequence belongs to the phospholipase A2 family. Group I subfamily. D49 sub-subfamily. Ca(2+) is required as a cofactor. Expressed by the venom gland.

It localises to the secreted. It carries out the reaction a 1,2-diacyl-sn-glycero-3-phosphocholine + H2O = a 1-acyl-sn-glycero-3-phosphocholine + a fatty acid + H(+). Functionally, PLA2 catalyzes the calcium-dependent hydrolysis of the 2-acyl groups in 3-sn-phosphoglycerides. This chain is Acidic phospholipase A2 3, found in Tropidechis carinatus (Australian rough-scaled snake).